We begin with the raw amino-acid sequence, 92 residues long: UPF0237 protein MA_3235 (92 aa).

One can recognise an ACT domain in the interval 7–81 (IITVIGSDRV…KSLGVEVKVQ (75 aa)).

This sequence belongs to the UPF0237 family.

The sequence is that of UPF0237 protein MA_3235 from Methanosarcina acetivorans (strain ATCC 35395 / DSM 2834 / JCM 12185 / C2A).